An 860-amino-acid polypeptide reads, in one-letter code: MVSRSYSNLLELASGDSPTFGRMNRQIPRIMAVAGIMSNIDNDSKDTDLSPKDRIIIVANELPIRAQRRVDGNGSGSSSSSTCCSKGWNFSWDENSLLLQLKDGLGDEAIEVIYVGCLKEEIPLNEQEEVYQILLESFKCVPTFLPLDLYTRYYHGFCKQQLWPLFHYMLPLSPDLGGRFDRTLWQAYVSVNKIFADRIMEVINPEDDFVWIHDYHLMVLPTFLRKRFNRVKLGFFLHSPFPSSEIYKTLPIREELLRALLNSDLIGFHTFDYARHFLSCCSRMLGLTYESKRGYIGLEYYGRTVSIKILPVGIHMGQLQSVLSLPETERKVGELIERYGRKGRTMLLGVDDMDIFKGITLKLLAMEQLLMQHPEWQGKVVLVQIANPARGKGKDVKEMQAETYSTVKRINETFGRPGYDPIVLIDAPLKFYERVAYYVVAECCLVTAVRDGMNLIPYEYIVSRQGNEKLDKILKLEANNRNKKSMLVVSEFIGCSPSLSGAIRVNPWNVDAVADAMDSALEVAEPEKQLRHEKHYKYVSTHDVGYWARSFLQDLERSCGEHGRRRCWGIGFGLSFRVVALDQSFRKLSMEHIVSAYKRTKTRAILLDYDDTLMPQGSIDKRPSSKSIDILNTLCRDKGNLVFIVSAKSRETLSDWFSPCEKLGIAAEHGYFLRLRKAVEWENCVAAVDCSWKQIAEPVMELYTETTDGSTIEDKETALVWSYEDADPDFGSCQAKELLDHLESVLANEPVTVKRGQNYVEVKPQGVSKGLIARRMLSMMQERGTLPEFVLCIGDDRSDEDMFEVICSSTEGPSIAPRAEIFACTVGQKPSKAKYYLDDTTEIVRLMHGLASVTDQITPV.

A Phosphoserine modification is found at S5. A glycosyltransferase region spans residues 53–557; the sequence is DRIIIVANEL…ARSFLQDLER (505 aa).

In the N-terminal section; belongs to the glycosyltransferase 20 family. This sequence in the C-terminal section; belongs to the trehalose phosphatase family. As to quaternary structure, binds to the phosphopeptide-binding site of GRF/14-3-3. Post-translationally, phosphorylated. Expressed in seedlings, leaves, stems, flowers, siliques and roots.

It carries out the reaction D-glucose 6-phosphate + UDP-alpha-D-glucose = alpha,alpha-trehalose 6-phosphate + UDP + H(+). Regulates plant architecture, shape of epidermal pavement cells and branching of trichomes. The chain is Alpha,alpha-trehalose-phosphate synthase [UDP-forming] 6 from Arabidopsis thaliana (Mouse-ear cress).